Reading from the N-terminus, the 271-residue chain is Low choriolytic enzyme (271 aa).

A signal peptide spans 1–20; that stretch reads MDLLAKASVLLLLLLSLSNA. Residues 21 to 71 constitute a propeptide, activation peptide; it reads QTDNMEEAENGSSKEEIDESELEDVSSIIFRMNNNSMEELLEGDLVLPKTR. Residues N30 and N54 are each glycosylated (N-linked (GlcNAc...) asparagine). The Peptidase M12A domain occupies 72 to 271; that stretch reads NAMKCFGAPD…ILRVNKLYKC (200 aa). 3 disulfide bridges follow: C76–C83, C123–C271, and C144–C164. H172 is a Zn(2+) binding site. The active site involves E173. The Zn(2+) site is built by H176 and H182. Residue N211 is glycosylated (N-linked (GlcNAc...) asparagine).

It depends on Zn(2+) as a cofactor.

It is found in the zymogen granule. The enzyme catalyses Hydrolysis of the inner layer of fish egg envelope. Also hydrolysis of casein and small molecule substrates such as succinyl-Leu-Leu-Val-Tyr-|-7-(4-methyl)coumarylamide.. Functionally, participates in the breakdown of the egg envelope, which is derived from the egg extracellular matrix, at the time of hatching. Thus allowing the newly hatched fish to swim free. LCE solubilizes the egg envelope only after it has been swollen by the action of HCE. This is Low choriolytic enzyme (lce) from Oryzias latipes (Japanese rice fish).